Here is a 492-residue protein sequence, read N- to C-terminus: Ketol-acid reductoisomerase (NADP(+)) (492 aa).

Residues 17 to 208 form the KARI N-terminal Rossmann domain; that stretch reads LGQCRLMKKN…GSNKAGVLES (192 aa). Residues 45 to 48, Arg68, Ser76, and Ser78 contribute to the NADP(+) site; that span reads CGSQ. The active site involves His132. Gly158 serves as a coordination point for NADP(+). KARI C-terminal knotted domains are found at residues 209–344 and 345–487; these read SFVA…KAPV and YCET…MKDM. Residues Asp217, Glu221, Glu389, and Glu393 each contribute to the Mg(2+) site. Position 414 (Ser414) interacts with substrate.

The protein belongs to the ketol-acid reductoisomerase family. The cofactor is Mg(2+).

It carries out the reaction (2R)-2,3-dihydroxy-3-methylbutanoate + NADP(+) = (2S)-2-acetolactate + NADPH + H(+). It catalyses the reaction (2R,3R)-2,3-dihydroxy-3-methylpentanoate + NADP(+) = (S)-2-ethyl-2-hydroxy-3-oxobutanoate + NADPH + H(+). The protein operates within amino-acid biosynthesis; L-isoleucine biosynthesis; L-isoleucine from 2-oxobutanoate: step 2/4. It functions in the pathway amino-acid biosynthesis; L-valine biosynthesis; L-valine from pyruvate: step 2/4. In terms of biological role, involved in the biosynthesis of branched-chain amino acids (BCAA). Catalyzes an alkyl-migration followed by a ketol-acid reduction of (S)-2-acetolactate (S2AL) to yield (R)-2,3-dihydroxy-isovalerate. In the isomerase reaction, S2AL is rearranged via a Mg-dependent methyl migration to produce 3-hydroxy-3-methyl-2-ketobutyrate (HMKB). In the reductase reaction, this 2-ketoacid undergoes a metal-dependent reduction by NADPH to yield (R)-2,3-dihydroxy-isovalerate. This is Ketol-acid reductoisomerase (NADP(+)) from Blochmanniella floridana.